A 409-amino-acid chain; its full sequence is MSESISHQLQLIRRGCQELLIEEEFAQKLAQGRPLRVKAGFDPTAPDLHLGHTVLLNKLRQLQDLGHHILFLIGDFTGMIGDPSGKSATRPPLTREQITQNADTYASQVFKILKPEQTEVVFNSSWMDKFSAADVIRLAATYTVARMLERDDFSKRYHENRPIAIHEFLYPLVQGYDSVALKADLELGGTDQKFNLLVGRELQKHYGQPPQCILTMPLLEGLDGIQKMSKSLNNYVGINESPAEIFGKLMSVSDTLMWRYIELLSFESLETVRQWQNEVESGCNPREIKMRFAREIVARFHSQTDAVRAAEEFEARFSKGVIPDDIPEKKLYIQDAGLALPQLLKLAGLTASTSEALRMIEQGGVKLNGDKVSDKTRIIPSNVTVIAQIGKRKFAKVTLVTEQSGKQAN.

Residues 43–52 (PTAPDLHLGH) carry the 'HIGH' region motif. A 'KMSKS' region motif is present at residues 227-231 (KMSKS). K230 is a binding site for ATP. One can recognise an S4 RNA-binding domain in the interval 338–399 (LALPQLLKLA…GKRKFAKVTL (62 aa)).

It belongs to the class-I aminoacyl-tRNA synthetase family. TyrS type 2 subfamily. In terms of assembly, homodimer.

Its subcellular location is the cytoplasm. It catalyses the reaction tRNA(Tyr) + L-tyrosine + ATP = L-tyrosyl-tRNA(Tyr) + AMP + diphosphate + H(+). Catalyzes the attachment of tyrosine to tRNA(Tyr) in a two-step reaction: tyrosine is first activated by ATP to form Tyr-AMP and then transferred to the acceptor end of tRNA(Tyr). The chain is Tyrosine--tRNA ligase from Nitrosomonas europaea (strain ATCC 19718 / CIP 103999 / KCTC 2705 / NBRC 14298).